A 107-amino-acid chain; its full sequence is Ig kappa chain V-VI region XRPC 44 (107 aa).

Residues 1-23 (EIVLTQSPAITAASLGQKVTITC) form a framework-1 region. Cys-23 and Cys-87 are joined by a disulfide. The segment at 24-33 (SASSSVSYMH) is complementarity-determining-1. Residues 34–48 (WYQQKSGTSPKPWIY) form a framework-2 region. The tract at residues 49 to 55 (EISKLAS) is complementarity-determining-2. Residues 56–87 (GVPARFSGSGSGTSYSLTISSMEAEDAAIYYC) form a framework-3 region. Residues 88–96 (QQWNYPLWT) are complementarity-determining-3. Positions 97–106 (FGGGTKLEIK) are framework-4.

This is Ig kappa chain V-VI region XRPC 44 from Mus musculus (Mouse).